Reading from the N-terminus, the 319-residue chain is Acetyl-coenzyme A carboxylase carboxyl transferase subunit alpha (319 aa).

The region spanning 35 to 296 is the CoA carboxyltransferase C-terminal domain; that stretch reads NLDEEVQRLR…KAQLLDDLSE (262 aa).

Belongs to the AccA family. In terms of assembly, acetyl-CoA carboxylase is a heterohexamer composed of biotin carboxyl carrier protein (AccB), biotin carboxylase (AccC) and two subunits each of ACCase subunit alpha (AccA) and ACCase subunit beta (AccD).

The protein localises to the cytoplasm. It carries out the reaction N(6)-carboxybiotinyl-L-lysyl-[protein] + acetyl-CoA = N(6)-biotinyl-L-lysyl-[protein] + malonyl-CoA. The protein operates within lipid metabolism; malonyl-CoA biosynthesis; malonyl-CoA from acetyl-CoA: step 1/1. Functionally, component of the acetyl coenzyme A carboxylase (ACC) complex. First, biotin carboxylase catalyzes the carboxylation of biotin on its carrier protein (BCCP) and then the CO(2) group is transferred by the carboxyltransferase to acetyl-CoA to form malonyl-CoA. The polypeptide is Acetyl-coenzyme A carboxylase carboxyl transferase subunit alpha (Sodalis glossinidius (strain morsitans)).